The sequence spans 238 residues: Uridylate kinase (238 aa).

Residue 12–15 participates in ATP binding; that stretch reads KLSG. Glycine 54 contributes to the UMP binding site. ATP-binding residues include glycine 55 and arginine 59. Residues aspartate 74 and 135 to 142 each bind UMP; that span reads TGNPFFTT. Residues threonine 162, tyrosine 168, and aspartate 171 each contribute to the ATP site.

The protein belongs to the UMP kinase family. In terms of assembly, homohexamer.

The protein resides in the cytoplasm. It catalyses the reaction UMP + ATP = UDP + ADP. The protein operates within pyrimidine metabolism; CTP biosynthesis via de novo pathway; UDP from UMP (UMPK route): step 1/1. Inhibited by UTP. Catalyzes the reversible phosphorylation of UMP to UDP. The chain is Uridylate kinase from Herminiimonas arsenicoxydans.